The primary structure comprises 135 residues: Large ribosomal subunit protein uL22c (135 aa).

Belongs to the universal ribosomal protein uL22 family. Part of the 50S ribosomal subunit.

It localises to the plastid. This protein binds specifically to 23S rRNA. In terms of biological role, the globular domain of the protein is located near the polypeptide exit tunnel on the outside of the subunit, while an extended beta-hairpin is found that lines the wall of the exit tunnel in the center of the 70S ribosome. The sequence is that of Large ribosomal subunit protein uL22c (rpl22) from Cuscuta exaltata (Tall dodder).